The sequence spans 167 residues: Dihydrofolate reductase (167 aa).

The DHFR domain maps to 1-162 (MFISMWAQDK…YPHRFQKWQK (162 aa)). NADP(+) is bound by residues Ala-7 and 13–19 (LIGKDGL). Asp-27 is a binding site for substrate. Residue 45–46 (KT) coordinates NADP(+). Arg-58 contributes to the substrate binding site. Residues 64 to 65 (TT) and 99 to 106 (GGSRIFQA) contribute to the NADP(+) site. Thr-117 lines the substrate pocket.

This sequence belongs to the dihydrofolate reductase family.

The enzyme catalyses (6S)-5,6,7,8-tetrahydrofolate + NADP(+) = 7,8-dihydrofolate + NADPH + H(+). The protein operates within cofactor biosynthesis; tetrahydrofolate biosynthesis; 5,6,7,8-tetrahydrofolate from 7,8-dihydrofolate: step 1/1. In terms of biological role, key enzyme in folate metabolism. Catalyzes an essential reaction for de novo glycine and purine synthesis, and for DNA precursor synthesis. The polypeptide is Dihydrofolate reductase (folA) (Enterococcus faecium (Streptococcus faecium)).